The chain runs to 107 residues: Benzene 1,2-dioxygenase system ferredoxin subunit (107 aa).

Positions threonine 4 to valine 99 constitute a Rieske domain. [2Fe-2S] cluster is bound by residues cysteine 43, histidine 45, cysteine 62, and histidine 65.

Belongs to the bacterial ring-hydroxylating dioxygenase ferredoxin component family. As to quaternary structure, this dioxygenase system consists of four proteins: the two subunits of the hydroxylase component (BnzA and BnzB), a ferredoxin (BnzC) and a ferredoxin reductase (BnzD).

It functions in the pathway aromatic compound metabolism; benzene degradation; catechol from benzene: step 1/2. Its function is as follows. This protein seems to be a 2Fe-2S ferredoxin. The sequence is that of Benzene 1,2-dioxygenase system ferredoxin subunit (bnzC) from Pseudomonas putida (Arthrobacter siderocapsulatus).